We begin with the raw amino-acid sequence, 268 residues long: Regulatory protein zeste (268 aa).

The DNA-binding element occupies T1 to Y72. Residues V94 to H108 show a composition bias toward low complexity. The disordered stretch occupies residues V94 to Q133. The segment covering Q110–P119 has biased composition (basic and acidic residues).

As to quaternary structure, self-associates forming complexes of several hundred monomers.

Its subcellular location is the nucleus. Its function is as follows. Involved in transvection phenomena (= synapsis-dependent gene expression), where the synaptic pairing of chromosomes carrying genes with which zeste interacts influences the expression of these genes. Zeste binds to DNA and stimulates transcription from a nearby promoter. The sequence is that of Regulatory protein zeste (z) from Drosophila sechellia (Fruit fly).